The sequence spans 214 residues: Adenylate kinase (214 aa).

10-15 serves as a coordination point for ATP; sequence GAGKGT. Positions 30 to 59 are NMP; it reads STGDMLRAAVKAGTELGKQAKEIMDAGKLV. AMP-binding positions include threonine 31, arginine 36, 57-59, 85-88, and glutamine 92; these read KLV and GFPR. An LID region spans residues 122–159; that stretch reads GRRVHAASGRVYHVKFNPPKVEGKDDVTGEDLTIRKDD. Residues arginine 123 and 132–133 each bind ATP; that span reads VY. AMP contacts are provided by arginine 156 and arginine 167. Arginine 200 lines the ATP pocket.

It belongs to the adenylate kinase family. In terms of assembly, monomer.

It localises to the cytoplasm. It catalyses the reaction AMP + ATP = 2 ADP. It participates in purine metabolism; AMP biosynthesis via salvage pathway; AMP from ADP: step 1/1. Its function is as follows. Catalyzes the reversible transfer of the terminal phosphate group between ATP and AMP. Plays an important role in cellular energy homeostasis and in adenine nucleotide metabolism. In Pectobacterium carotovorum subsp. carotovorum (strain PC1), this protein is Adenylate kinase.